Reading from the N-terminus, the 540-residue chain is Threonine--tRNA ligase catalytic subunit (540 aa).

Residues 134–428 (DHRIIGERLD…LLEHFRGKLP (295 aa)) form a catalytic region. The Zn(2+) site is built by cysteine 226, histidine 277, and histidine 405.

The protein belongs to the class-II aminoacyl-tRNA synthetase family. Homodimer. Probably interacts with its editing subunit. Zn(2+) is required as a cofactor.

The protein localises to the cytoplasm. The enzyme catalyses tRNA(Thr) + L-threonine + ATP = L-threonyl-tRNA(Thr) + AMP + diphosphate + H(+). Its function is as follows. Catalyzes the attachment of threonine to tRNA(Thr) in a two-step reaction: L-threonine is first activated by ATP to form Thr-AMP and then transferred to the acceptor end of tRNA(Thr). Also activates L-serine and transfers it to tRNA(Thr) but cannot deacylate incorrectly charged amino acid; unlike most archaea the editing function is found in a freestanding protein. The sequence is that of Threonine--tRNA ligase catalytic subunit from Sulfurisphaera tokodaii (strain DSM 16993 / JCM 10545 / NBRC 100140 / 7) (Sulfolobus tokodaii).